Here is a 271-residue protein sequence, read N- to C-terminus: Phospholipid scramblase family member 5 (271 aa).

Positions 1–10 (MASKDAQNQR) are enriched in polar residues. Residues 1-33 (MASKDAQNQRRGLPGFLPGAPDPDQSLPASSNP) are disordered. Residues 1-45 (MASKDAQNQRRGLPGFLPGAPDPDQSLPASSNPGNQAWQLSLPLP) form a proline-rich domain (PRD) region.

This sequence belongs to the phospholipid scramblase family.

In Homo sapiens (Human), this protein is Phospholipid scramblase family member 5 (PLSCR5).